The following is a 609-amino-acid chain: Snake venom metalloproteinase-disintegrin-like mocarhagin (609 aa).

Residues 1 to 20 (MIQALLVAICLAVFPYQGSS) form the signal peptide. Residues 21 to 191 (IILESGNVND…DEPIEKSSQL (171 aa)) constitute a propeptide that is removed on maturation. The Peptidase M12B domain maps to 205–400 (KYIEFYVVVD…DRPQCILNKP (196 aa)). 2 residues coordinate Ca(2+): E208 and D292. N303 carries an N-linked (GlcNAc...) asparagine glycan. Intrachain disulfides connect C316–C395, C356–C379, and C358–C363. Residues H341 and H345 each coordinate Zn(2+). Residues C395, N398, V410, N413, F415, E417, E420, and D423 each coordinate Ca(2+). Residues 408 to 494 (PPVCGNYFVE…KCPKDSFQRN (87 aa)) form the Disintegrin domain. Intrachain disulfides connect C411/C440, C422/C435, C424/C430, C434/C457, C448/C454, C453/C479, C466/C486, C473/C505, C498/C510, C517/C567, C532/C575, C545/C555, C562/C601, and C595/C606. Positions 472–474 (DCD) match the D/ECD-tripeptide motif. Residue N507 is glycosylated (N-linked (GlcNAc...) asparagine).

Belongs to the venom metalloproteinase (M12B) family. P-III subfamily. P-IIIa sub-subfamily. In terms of assembly, monomer. It depends on Zn(2+) as a cofactor. As to expression, expressed by the venom gland.

Its subcellular location is the secreted. With respect to regulation, inhibited by EDTA and diisopropyl fluorophosphate (DFP). Also inhibited by an excess of zinc or calcium ions. Functionally, snake venom zinc metalloproteinase that inhibits platelet aggregation by cleaving platelet glycoprotein Ib alpha (GP1BA) at Glu-298/Asp-299, and abolishes binding of von Willebrand factor (VWF) to GPIBA. Cleaves P-selectin glycoprotein ligand-1 (PSGL-1/SELPLG) at Tyr-51/Asp-52, and completely abolishes the binding of PSGL-1 to P-selectin. Anionic amino acid sequences containing sulfated tyrosines are needed for cleavages. Inhibits the thrombin-induced platelet aggregation, and the thrombin-induced release of ATP and ADP. Has lectin activity (inhibited by heparin). This Naja mossambica (Mozambique spitting cobra) protein is Snake venom metalloproteinase-disintegrin-like mocarhagin.